The following is a 363-amino-acid chain: DNA replication and repair protein RecF (363 aa).

30 to 37 contacts ATP; the sequence is GINGSGKS.

This sequence belongs to the RecF family.

The protein resides in the cytoplasm. In terms of biological role, the RecF protein is involved in DNA metabolism; it is required for DNA replication and normal SOS inducibility. RecF binds preferentially to single-stranded, linear DNA. It also seems to bind ATP. The polypeptide is DNA replication and repair protein RecF (Pseudoalteromonas atlantica (strain T6c / ATCC BAA-1087)).